The sequence spans 139 residues: uncharacterized protein (139 aa).

This is an uncharacterized protein from Invertebrate iridescent virus 6 (IIV-6).